A 421-amino-acid chain; its full sequence is tRNA (guanine-N(7)-)-methyltransferase non-catalytic subunit TRM82 (421 aa).

3 WD repeats span residues 72–112, 170–212, and 216–258; these read AVYS…EDPE, GHVS…IVDK, and GHKE…SQYS.

Belongs to the WD repeat TRM82 family. In terms of assembly, forms a heterodimer with the catalytic subunit TRM8.

It is found in the nucleus. The protein operates within tRNA modification; N(7)-methylguanine-tRNA biosynthesis. In terms of biological role, required for the formation of N(7)-methylguanine at position 46 (m7G46) in tRNA. In the complex, it is required to stabilize and induce conformational changes of the catalytic subunit. The sequence is that of tRNA (guanine-N(7)-)-methyltransferase non-catalytic subunit TRM82 from Candida glabrata (strain ATCC 2001 / BCRC 20586 / JCM 3761 / NBRC 0622 / NRRL Y-65 / CBS 138) (Yeast).